The following is a 408-amino-acid chain: Serine/threonine transporter SstT (408 aa).

9 consecutive transmembrane segments (helical) span residues 11–31 (LANGSLVLQILVGIIAGVSLA), 43–63 (FLGSLFVGALKAIAPILVFIL), 82–102 (IVVLYLFGTFAAALTAVVLSM), 141–161 (ALMTGNYIGILAWGVGLGLAL), 192–212 (IGIFGLVAATFAETGFAAIAG), 216–236 (LLAVLLGAMAIIALIVNPLIV), 290–310 (IPLGATINMGGAAITITVLTL), 316–336 (LGIQVDLLTALLLSVVAAISA), and 363–383 (VAMQVVAVGFIIGVIQDAAET).

Belongs to the dicarboxylate/amino acid:cation symporter (DAACS) (TC 2.A.23) family.

The protein resides in the cell inner membrane. The enzyme catalyses L-serine(in) + Na(+)(in) = L-serine(out) + Na(+)(out). It carries out the reaction L-threonine(in) + Na(+)(in) = L-threonine(out) + Na(+)(out). Functionally, involved in the import of serine and threonine into the cell, with the concomitant import of sodium (symport system). The chain is Serine/threonine transporter SstT from Shewanella sp. (strain ANA-3).